The primary structure comprises 204 residues: Recombination protein RecR (204 aa).

Residues Cys58 to Cys75 form a C4-type zinc finger. A Toprim domain is found at Ser83–Pro181.

It belongs to the RecR family.

Its function is as follows. May play a role in DNA repair. It seems to be involved in an RecBC-independent recombinational process of DNA repair. It may act with RecF and RecO. The polypeptide is Recombination protein RecR (Chlorobaculum parvum (strain DSM 263 / NCIMB 8327) (Chlorobium vibrioforme subsp. thiosulfatophilum)).